A 286-amino-acid polypeptide reads, in one-letter code: Deleted in azoospermia-like-B (286 aa).

The region spanning 33–114 is the RRM domain; it reads NTVFVGGIDI…PAIRKICTYV (82 aa). The region spanning 155 to 180 is the DAZ domain; that stretch reads ACPYPSSPPMAIQQIPVGCQQPGYFQ.

The protein belongs to the RRM DAZ family. As to quaternary structure, interacts with the C-terminus of pabp1 and with epabp. Prior to oocyte maturation, found in a complex with epabp and pum2 proteins and spdy1 mRNA; pum2 dissociates from the complex during maturation.

It is found in the cytoplasm. Its function is as follows. RNA-binding protein that is required for primordial germ cell (PGC) differentiation and indirectly necessary for the migration of PGCs through the endoderm. May promote meiotic cell division during spermatogenesis. Shows a preference for G- and U-rich RNAs and probably binds the 3'-UTR of target mRNAs. Stimulates the initiation of translation of mRNAs through the recruitment of poly(A)-binding proteins (PABPs). The polypeptide is Deleted in azoospermia-like-B (dazl-b) (Xenopus laevis (African clawed frog)).